Reading from the N-terminus, the 429-residue chain is ATP-dependent Clp protease ATP-binding subunit ClpX (429 aa).

The ClpX-type ZB domain occupies 1–54 (MARSKSQKIEGCSFCGRTRAEAEGKIISAKSVAICFECSKICHNLFKEESDKPA). Positions 12, 15, 35, and 38 each coordinate Zn(2+). 119–126 (PTGSGKTL) contributes to the ATP binding site.

It belongs to the ClpX chaperone family. In terms of assembly, component of the ClpX-ClpP complex. Forms a hexameric ring that, in the presence of ATP, binds to fourteen ClpP subunits assembled into a disk-like structure with a central cavity, resembling the structure of eukaryotic proteasomes.

Its function is as follows. ATP-dependent specificity component of the Clp protease. It directs the protease to specific substrates. Can perform chaperone functions in the absence of ClpP. This chain is ATP-dependent Clp protease ATP-binding subunit ClpX, found in Borrelia duttonii (strain Ly).